The following is a 131-amino-acid chain: Large ribosomal subunit protein bL17 (131 aa).

It belongs to the bacterial ribosomal protein bL17 family. As to quaternary structure, part of the 50S ribosomal subunit. Contacts protein L32.

The sequence is that of Large ribosomal subunit protein bL17 from Burkholderia multivorans (strain ATCC 17616 / 249).